The primary structure comprises 373 residues: Secondary metabolism regulator laeA (373 aa).

Disordered stretches follow at residues 1-21 (MFLN…PLNV) and 53-81 (AAER…NPDR). Positions 67–77 (GSPSINSTSSK) are enriched in polar residues.

The protein belongs to the methyltransferase superfamily. LaeA methyltransferase family. In terms of assembly, component of the heterotrimeric velvet complex composed of laeA, veA and velB; VeA acting as a bridging protein between laeA and velB.

It is found in the nucleus. It catalyses the reaction L-methionyl-[protein] + S-adenosyl-L-methionine = S-methyl-L-methionyl-[protein] + S-adenosyl-L-homocysteine. Its function is as follows. Methyltransferase that performs automethylation. No other methyl-accepting substrate has been identified yet. Component of the velvet transcription factor complex that acts as a global regulator for secondary metabolite gene expression. Controls the expression of the cyclopiazonic acid (CPA) gene clusters. Regulates also pigmentation and conidial head morphology. The sequence is that of Secondary metabolism regulator laeA from Aspergillus fumisynnematus.